Reading from the N-terminus, the 883-residue chain is Alanine--tRNA ligase (883 aa).

The Zn(2+) site is built by His-565, His-569, Cys-675, and His-679.

Belongs to the class-II aminoacyl-tRNA synthetase family. It depends on Zn(2+) as a cofactor.

Its subcellular location is the cytoplasm. The enzyme catalyses tRNA(Ala) + L-alanine + ATP = L-alanyl-tRNA(Ala) + AMP + diphosphate. Functionally, catalyzes the attachment of alanine to tRNA(Ala) in a two-step reaction: alanine is first activated by ATP to form Ala-AMP and then transferred to the acceptor end of tRNA(Ala). Also edits incorrectly charged Ser-tRNA(Ala) and Gly-tRNA(Ala) via its editing domain. The protein is Alanine--tRNA ligase of Rhodospirillum rubrum (strain ATCC 11170 / ATH 1.1.1 / DSM 467 / LMG 4362 / NCIMB 8255 / S1).